A 563-amino-acid chain; its full sequence is Probable Xaa-Pro aminopeptidase PEPP (563 aa).

4 residues coordinate Mn(2+): Asp-331, Asp-342, Glu-491, and Glu-532.

This sequence belongs to the peptidase M24B family. Mn(2+) is required as a cofactor.

It carries out the reaction Release of any N-terminal amino acid, including proline, that is linked to proline, even from a dipeptide or tripeptide.. Catalyzes the removal of a penultimate prolyl residue from the N-termini of peptides. The chain is Probable Xaa-Pro aminopeptidase PEPP (PEPP) from Verticillium alfalfae (strain VaMs.102 / ATCC MYA-4576 / FGSC 10136) (Verticillium wilt of alfalfa).